The chain runs to 342 residues: dTDP-3,4-didehydro-2,6-dideoxy-alpha-D-glucose 3-reductase (342 aa).

Residue 19 to 25 (CADIALR) coordinates NADP(+). Position 26 (arginine 26) interacts with substrate. NADP(+)-binding positions include 44-45 (SR), tyrosine 65, leucine 81, and histidine 86. Lysine 104 functions as the Proton donor in the catalytic mechanism. Residues arginine 172 and aspartate 184 each contribute to the NADP(+) site. Substrate is bound by residues tyrosine 243 and serine 263.

Belongs to the Gfo/Idh/MocA family.

It catalyses the reaction dTDP-4-dehydro-2,6-dideoxy-alpha-D-glucose + NADP(+) = dTDP-3,4-didehydro-2,6-dideoxy-alpha-D-glucose + NADPH + H(+). It functions in the pathway antibiotic biosynthesis; granaticin biosynthesis. Functionally, involved in the biosynthesis of the 2,6-deoxysugar, dTDP-L-rhodinose, attached to the benzoisochromane quinone chromophore to produce the aglycone antibiotics granaticin and granaticin B. Catalyzes the reduction of the C-3 keto moiety of dTDP-3,4-diketo-2,6-dideoxy-alpha-D-glucose to yield dTDP-4-keto-2,6-dideoxy-alpha-D-glucose. NADPH is the better reductant, however NADH can also be used. The protein is dTDP-3,4-didehydro-2,6-dideoxy-alpha-D-glucose 3-reductase of Streptomyces violaceoruber.